Here is a 318-residue protein sequence, read N- to C-terminus: MPAGLPGQASVAVRLSCDVPPDARHHEPRPGMTDHPDTGNGIGLTGRPPRAIPDPAPRSSHGPAKVIAMCNQKGGVGKTTSTINLGAALGEYGRRVLLVDMDPQGALSAGLGVPHYELDKTIHNVLVEPRVSIDDVLIHSRVKNMDLVPSNIDLSAAEIQLVNEVGREQTLARALYPVLDRYDYVLIDCQPSLGLLTVNGLACTDGVIIPTECEFFSLRGLALLTDTVDKVRDRLNPKLDISGILITRYDPRTVNSREVMARVVERFGDLVFDTVITRTVRFPETSVAGEPITTWAPKSAGALAYRALARELIDRFGM.

The interval 19–63 (VPPDARHHEPRPGMTDHPDTGNGIGLTGRPPRAIPDPAPRSSHGP) is disordered. Residues 21–37 (PDARHHEPRPGMTDHPD) are compositionally biased toward basic and acidic residues. 72-79 (QKGGVGKT) provides a ligand contact to ATP.

This sequence belongs to the ParA family.

May play a role in septum formation. This is an uncharacterized protein from Mycobacterium tuberculosis (strain CDC 1551 / Oshkosh).